The chain runs to 547 residues: MAAKDVKFDTDARDRMLRGVNILADAVKVTLGPKGRNVVIDKSFGAPRITKDGVSVAKEIELSDKFENMGAQMVKEVASRTNDEAGDGTTTATVLAQAIIKEGLKAVAAGMNPMDLKRGIDLATSKVVEAIKAAARPVNDSHEVAQVGTISANGEAQIGRFIAEAMQKVGNEGVITVEENKGLETEVEVVEGMQFDRGYLSPYFVTNADKMTAELDDVYILLHEKKLSSLQPMVPLLEAVIQSQKPLLIIAEDVEGEALATLVVNKLRGGLKIAAVKAPGFGDRRKAMLQDIAILTGGQVISEDLGMKLENVTIDMLGRAKKISINKDNTTIVDGNGDKAEIDARVAQIRNQIEETSSDYDREKLQERVAKLAGGVAVIRVGGMTEVEVKERKDRVDDALNATRAAVQEGIVVGGGVALIQGGKALDGLTGENPDQNAGITIVRRALEAPLRQIAQNAGVDGSVVAGKVRESNEKSFGFNAQTEEYGDMFKFGVIDPAKVVRTALEDAASVASLLITTEAMIADKPEPKSPAGGPGMGGMGGMDGMM.

Residues 30-33 (TLGP), K51, 87-91 (DGTTT), G415, and D496 contribute to the ATP site. The tract at residues 525–547 (KPEPKSPAGGPGMGGMGGMDGMM) is disordered. Gly residues predominate over residues 533–547 (GGPGMGGMGGMDGMM).

Belongs to the chaperonin (HSP60) family. Forms a cylinder of 14 subunits composed of two heptameric rings stacked back-to-back. Interacts with the co-chaperonin GroES.

It is found in the cytoplasm. It carries out the reaction ATP + H2O + a folded polypeptide = ADP + phosphate + an unfolded polypeptide.. In terms of biological role, together with its co-chaperonin GroES, plays an essential role in assisting protein folding. The GroEL-GroES system forms a nano-cage that allows encapsulation of the non-native substrate proteins and provides a physical environment optimized to promote and accelerate protein folding. This chain is Chaperonin GroEL, found in Cereibacter sphaeroides (strain ATCC 17029 / ATH 2.4.9) (Rhodobacter sphaeroides).